We begin with the raw amino-acid sequence, 708 residues long: Ion-translocating oxidoreductase complex subunit C (708 aa).

4Fe-4S ferredoxin-type domains lie at 369 to 397 (GEPQ…QQLY) and 407 to 436 (KATT…VQYF). 8 residues coordinate [4Fe-4S] cluster: cysteine 377, cysteine 380, cysteine 383, cysteine 387, cysteine 416, cysteine 419, cysteine 422, and cysteine 426. The disordered stretch occupies residues 663–684 (KARKLEQQQTNAEPEEQVDPRK).

It belongs to the 4Fe4S bacterial-type ferredoxin family. RnfC subfamily. The complex is composed of six subunits: RsxA, RsxB, RsxC, RsxD, RsxE and RsxG. The cofactor is [4Fe-4S] cluster.

The protein resides in the cell inner membrane. Functionally, part of a membrane-bound complex that couples electron transfer with translocation of ions across the membrane. Required to maintain the reduced state of SoxR. In Shigella boydii serotype 18 (strain CDC 3083-94 / BS512), this protein is Ion-translocating oxidoreductase complex subunit C.